The sequence spans 131 residues: Glycine cleavage system H protein (131 aa).

A Lipoyl-binding domain is found at 24–106 (RVTVGISDHA…YGDGWMYVVE (83 aa)). The residue at position 65 (K65) is an N6-lipoyllysine.

The protein belongs to the GcvH family. The glycine cleavage system is composed of four proteins: P, T, L and H. The cofactor is (R)-lipoate.

Functionally, the glycine cleavage system catalyzes the degradation of glycine. The H protein shuttles the methylamine group of glycine from the P protein to the T protein. The chain is Glycine cleavage system H protein from Stenotrophomonas maltophilia (strain R551-3).